Consider the following 489-residue polypeptide: Ribonuclease G (489 aa).

One can recognise an S1 motif domain in the interval 39-128 (GNIYKGRVSR…LTTDITLPSR (90 aa)). Residues aspartate 304 and aspartate 347 each contribute to the Mg(2+) site.

It belongs to the RNase E/G family. RNase G subfamily. In terms of assembly, homodimer, in equilibrium with possible higher multimers. It depends on Mg(2+) as a cofactor.

The protein resides in the cytoplasm. Its function is as follows. An endonuclease that acts in the processing of the 5'-end of 16S rRNA and 23S rRNA. It prefers 5'-monophosphorylated substrates and cleaves single-stranded sites rich in A and U residues; contributes to tRNA processing and mRNA turnover. The chain is Ribonuclease G (rng) from Escherichia coli O157:H7.